The primary structure comprises 326 residues: GTP cyclohydrolase MptA (326 aa).

Belongs to the GTP cyclohydrolase IV family. As to quaternary structure, homodimer. It depends on Fe(2+) as a cofactor.

The enzyme catalyses GTP + H2O = 7,8-dihydroneopterin 2',3'-cyclic phosphate + formate + diphosphate + H(+). It participates in cofactor biosynthesis; 5,6,7,8-tetrahydromethanopterin biosynthesis. Functionally, converts GTP to 7,8-dihydro-D-neopterin 2',3'-cyclic phosphate, the first intermediate in the biosynthesis of coenzyme methanopterin. This Methanoregula boonei (strain DSM 21154 / JCM 14090 / 6A8) protein is GTP cyclohydrolase MptA.